A 187-amino-acid chain; its full sequence is Shikimate kinase (187 aa).

14-19 (GSGKST) contacts ATP. S18 serves as a coordination point for Mg(2+). Positions 36, 60, and 82 each coordinate substrate. Residue R120 coordinates ATP. A substrate-binding site is contributed by R147.

This sequence belongs to the shikimate kinase family. In terms of assembly, monomer. The cofactor is Mg(2+).

It is found in the cytoplasm. The enzyme catalyses shikimate + ATP = 3-phosphoshikimate + ADP + H(+). Its pathway is metabolic intermediate biosynthesis; chorismate biosynthesis; chorismate from D-erythrose 4-phosphate and phosphoenolpyruvate: step 5/7. In terms of biological role, catalyzes the specific phosphorylation of the 3-hydroxyl group of shikimic acid using ATP as a cosubstrate. The sequence is that of Shikimate kinase from Chlorobaculum parvum (strain DSM 263 / NCIMB 8327) (Chlorobium vibrioforme subsp. thiosulfatophilum).